We begin with the raw amino-acid sequence, 344 residues long: Pre-mRNA polyadenylation factor fip1 (344 aa).

Disordered stretches follow at residues 1–99 (MSNA…LSTA) and 230–344 (NYNT…RNRY). Residues 28-38 (VTVSNAKSPEQ) show a composition bias toward polar residues. The segment covering 39-50 (ASEESDDSDIEF) has biased composition (acidic residues). Positions 80 to 92 (QVEKTAVEVKTTE) are enriched in basic and acidic residues. Over residues 243–258 (SGAATPNAYVNNNPSS) the composition is skewed to low complexity. Positions 271–301 (NITSSAGMTHAQPTHNPTSSYGNGASTNYNA) are enriched in polar residues. A compositionally biased stretch (low complexity) spans 302 to 317 (SRPPSNHPHSSNYPSS).

The protein belongs to the FIP1 family.

It is found in the nucleus. Functionally, pre-mRNA polyadenylation factor that directly interacts with poly(A) polymerase. This chain is Pre-mRNA polyadenylation factor fip1, found in Schizosaccharomyces pombe (strain 972 / ATCC 24843) (Fission yeast).